The following is a 183-amino-acid chain: Translation initiation factor IF-3 (183 aa).

Belongs to the IF-3 family. As to quaternary structure, monomer.

It is found in the cytoplasm. Its function is as follows. IF-3 binds to the 30S ribosomal subunit and shifts the equilibrium between 70S ribosomes and their 50S and 30S subunits in favor of the free subunits, thus enhancing the availability of 30S subunits on which protein synthesis initiation begins. This is Translation initiation factor IF-3 from Serratia marcescens.